The sequence spans 417 residues: Serine hydroxymethyltransferase (417 aa).

(6S)-5,6,7,8-tetrahydrofolate contacts are provided by residues Leu-121 and 125-127; that span reads GHL. The residue at position 229 (Lys-229) is an N6-(pyridoxal phosphate)lysine. 355 to 357 is a (6S)-5,6,7,8-tetrahydrofolate binding site; the sequence is SPF.

The protein belongs to the SHMT family. As to quaternary structure, homodimer. It depends on pyridoxal 5'-phosphate as a cofactor.

It localises to the cytoplasm. The catalysed reaction is (6R)-5,10-methylene-5,6,7,8-tetrahydrofolate + glycine + H2O = (6S)-5,6,7,8-tetrahydrofolate + L-serine. Its pathway is one-carbon metabolism; tetrahydrofolate interconversion. It participates in amino-acid biosynthesis; glycine biosynthesis; glycine from L-serine: step 1/1. Catalyzes the reversible interconversion of serine and glycine with tetrahydrofolate (THF) serving as the one-carbon carrier. This reaction serves as the major source of one-carbon groups required for the biosynthesis of purines, thymidylate, methionine, and other important biomolecules. Also exhibits THF-independent aldolase activity toward beta-hydroxyamino acids, producing glycine and aldehydes, via a retro-aldol mechanism. The polypeptide is Serine hydroxymethyltransferase (Salmonella schwarzengrund (strain CVM19633)).